Consider the following 110-residue polypeptide: UPF0060 membrane protein Ping_0587 (110 aa).

4 helical membrane passes run 6–26 (IFGIFTVTAVAEIVGCYLPYL), 33–53 (SIWLLVPAAFSLAAFVWLLTL), 61–81 (TYAAYGGIYVSVALMWLWLVE), and 87–107 (MTDLLGVLICIIGMAVIMFGP).

The protein belongs to the UPF0060 family.

The protein localises to the cell inner membrane. The protein is UPF0060 membrane protein Ping_0587 of Psychromonas ingrahamii (strain DSM 17664 / CCUG 51855 / 37).